Here is a 451-residue protein sequence, read N- to C-terminus: Rab GDP-dissociation inhibitor (451 aa).

Interaction with YPT1 stretches follow at residues 106–112 and 234–259; these read RYVDFKQ and YPMY…TYML.

Belongs to the Rab GDI family. Interacts with the GDP-bound form of Rab GTPase YPT1. Interacts with YPT10.

It is found in the cytoplasm. Regulates the GDP/GTP exchange reaction of SEC4 by inhibiting the dissociation of GDP from it, and the subsequent binding of GTP to SEC4. Plays an essential role in the yeast secretory pathway. Extracts GDP-bound YPT7 from vacuolar membranes, antagonizing vacuolar membrane fusion. The sequence is that of Rab GDP-dissociation inhibitor (GDI1) from Saccharomyces cerevisiae (strain ATCC 204508 / S288c) (Baker's yeast).